The primary structure comprises 165 residues: Ubiquitin-conjugating enzyme E2 G2 (165 aa).

N-acetylalanine is present on Ala2. Residues 4 to 164 (TALKRLMAEY…AKQIVQKSLG (161 aa)) form the UBC core domain. Cys89 serves as the catalytic Glycyl thioester intermediate.

Belongs to the ubiquitin-conjugating enzyme family. As to quaternary structure, interacts with AUP1 (via C-terminus); the interaction recruits UBE2G2 to lipid droplets. Interacts with ubiquitin ligases AMFR/gp78 and RNF139/TRC8; recruitment to lipid droplets by AUP1 facilitates interaction of UBE2G2 with AMFR and RNF139, leading to sterol-induced ubiquitination of 3-hydroxy-3-methylglutaryl coenzyme A reductase and its subsequent proteasomal degradation.

The protein localises to the endoplasmic reticulum. It localises to the lipid droplet. It catalyses the reaction S-ubiquitinyl-[E1 ubiquitin-activating enzyme]-L-cysteine + [E2 ubiquitin-conjugating enzyme]-L-cysteine = [E1 ubiquitin-activating enzyme]-L-cysteine + S-ubiquitinyl-[E2 ubiquitin-conjugating enzyme]-L-cysteine.. Its pathway is protein modification; protein ubiquitination. Its function is as follows. Accepts ubiquitin from the E1 complex and catalyzes its covalent attachment to other proteins. In vitro catalyzes 'Lys-48'-linked polyubiquitination. Involved in endoplasmic reticulum-associated degradation (ERAD). Required for sterol-induced ubiquitination of 3-hydroxy-3-methylglutaryl coenzyme A reductase and its subsequent proteasomal degradation. The chain is Ubiquitin-conjugating enzyme E2 G2 from Bos taurus (Bovine).